Consider the following 259-residue polypeptide: Dihydroorotate dehydrogenase B (NAD(+)), electron transfer subunit (259 aa).

The FAD-binding FR-type domain maps to 2–102 (MQKQNMIVVN…LGPLGHGFPV (101 aa)). Residues 53-56 (RPIS), 70-72 (LYR), and 77-78 (GT) each bind FAD. [2Fe-2S] cluster contacts are provided by C221, C226, C229, and C246.

The protein belongs to the PyrK family. As to quaternary structure, heterotetramer of 2 PyrK and 2 PyrD type B subunits. [2Fe-2S] cluster is required as a cofactor. Requires FAD as cofactor.

It participates in pyrimidine metabolism; UMP biosynthesis via de novo pathway; orotate from (S)-dihydroorotate (NAD(+) route): step 1/1. Functionally, responsible for channeling the electrons from the oxidation of dihydroorotate from the FMN redox center in the PyrD type B subunit to the ultimate electron acceptor NAD(+). The polypeptide is Dihydroorotate dehydrogenase B (NAD(+)), electron transfer subunit (Bacillus cereus (strain 03BB102)).